The primary structure comprises 154 residues: 6,7-dimethyl-8-ribityllumazine synthase (154 aa).

5-amino-6-(D-ribitylamino)uracil is bound by residues Phe-23, 57 to 59, and 81 to 83; these read AFE and AVI. A (2S)-2-hydroxy-3-oxobutyl phosphate-binding site is contributed by 86-87; it reads ST. The active-site Proton donor is the His-89. Phe-114 contacts 5-amino-6-(D-ribitylamino)uracil. Arg-128 is a (2S)-2-hydroxy-3-oxobutyl phosphate binding site.

The protein belongs to the DMRL synthase family.

The catalysed reaction is (2S)-2-hydroxy-3-oxobutyl phosphate + 5-amino-6-(D-ribitylamino)uracil = 6,7-dimethyl-8-(1-D-ribityl)lumazine + phosphate + 2 H2O + H(+). It functions in the pathway cofactor biosynthesis; riboflavin biosynthesis; riboflavin from 2-hydroxy-3-oxobutyl phosphate and 5-amino-6-(D-ribitylamino)uracil: step 1/2. Catalyzes the formation of 6,7-dimethyl-8-ribityllumazine by condensation of 5-amino-6-(D-ribitylamino)uracil with 3,4-dihydroxy-2-butanone 4-phosphate. This is the penultimate step in the biosynthesis of riboflavin. The sequence is that of 6,7-dimethyl-8-ribityllumazine synthase from Syntrophotalea carbinolica (strain DSM 2380 / NBRC 103641 / GraBd1) (Pelobacter carbinolicus).